Here is a 334-residue protein sequence, read N- to C-terminus: L-lactate dehydrogenase C chain (334 aa).

NAD(+)-binding positions include 30–58, R100, and N139; that span reads GQVG…LEDK. Residues N139 and R170 each contribute to the substrate site. H194 functions as the Proton acceptor in the catalytic mechanism. T249 serves as a coordination point for substrate.

This sequence belongs to the LDH/MDH superfamily. LDH family. As to quaternary structure, homotetramer.

The protein resides in the cytoplasm. The enzyme catalyses (S)-lactate + NAD(+) = pyruvate + NADH + H(+). The protein operates within fermentation; pyruvate fermentation to lactate; (S)-lactate from pyruvate: step 1/1. In Xenopus laevis (African clawed frog), this protein is L-lactate dehydrogenase C chain (ldhc).